Consider the following 434-residue polypeptide: Ribosomal protein uS12 methylthiotransferase RimO (434 aa).

Positions 4–122 (NRVDVITLGC…LISHLGKSYY (119 aa)) constitute an MTTase N-terminal domain. The [4Fe-4S] cluster site is built by Cys-13, Cys-51, Cys-85, Cys-146, Cys-150, and Cys-153. The 232-residue stretch at 132–363 (TTPRHYAYLK…MAVQERISAA (232 aa)) folds into the Radical SAM core domain. Residues 366 to 434 (EAKIGSRLRV…PFDLYARIVD (69 aa)) enclose the TRAM domain.

Belongs to the methylthiotransferase family. RimO subfamily. [4Fe-4S] cluster is required as a cofactor.

The protein localises to the cytoplasm. It catalyses the reaction L-aspartate(89)-[ribosomal protein uS12]-hydrogen + (sulfur carrier)-SH + AH2 + 2 S-adenosyl-L-methionine = 3-methylsulfanyl-L-aspartate(89)-[ribosomal protein uS12]-hydrogen + (sulfur carrier)-H + 5'-deoxyadenosine + L-methionine + A + S-adenosyl-L-homocysteine + 2 H(+). In terms of biological role, catalyzes the methylthiolation of an aspartic acid residue of ribosomal protein uS12. This Porphyromonas gingivalis (strain ATCC 33277 / DSM 20709 / CIP 103683 / JCM 12257 / NCTC 11834 / 2561) protein is Ribosomal protein uS12 methylthiotransferase RimO.